A 200-amino-acid chain; its full sequence is ATP-dependent Clp protease proteolytic subunit (200 aa).

The Nucleophile role is filled by Ser-99. His-124 is an active-site residue.

Belongs to the peptidase S14 family. Fourteen ClpP subunits assemble into 2 heptameric rings which stack back to back to give a disk-like structure with a central cavity, resembling the structure of eukaryotic proteasomes.

It localises to the cytoplasm. The enzyme catalyses Hydrolysis of proteins to small peptides in the presence of ATP and magnesium. alpha-casein is the usual test substrate. In the absence of ATP, only oligopeptides shorter than five residues are hydrolyzed (such as succinyl-Leu-Tyr-|-NHMec, and Leu-Tyr-Leu-|-Tyr-Trp, in which cleavage of the -Tyr-|-Leu- and -Tyr-|-Trp bonds also occurs).. Functionally, cleaves peptides in various proteins in a process that requires ATP hydrolysis. Has a chymotrypsin-like activity. Plays a major role in the degradation of misfolded proteins. In Syntrophomonas wolfei subsp. wolfei (strain DSM 2245B / Goettingen), this protein is ATP-dependent Clp protease proteolytic subunit.